The sequence spans 75 residues: Protein SlyX homolog (75 aa).

Belongs to the SlyX family.

This chain is Protein SlyX homolog, found in Vibrio campbellii (strain ATCC BAA-1116).